The sequence spans 38 residues: Photosystem I reaction center subunit IX (38 aa).

A helical membrane pass occupies residues 4–24 (FLTTAPVVAAIWFTLTAGILI).

The protein belongs to the PsaJ family.

It is found in the cellular thylakoid membrane. Its function is as follows. May help in the organization of the PsaE and PsaF subunits. This Parasynechococcus marenigrum (strain WH8102) protein is Photosystem I reaction center subunit IX.